Consider the following 326-residue polypeptide: ELAV-like protein 1-B (326 aa).

RRM domains are found at residues 20–98 (TNLI…FARP), 106–186 (ANLY…FAAN), and 244–322 (WCIF…FKTS).

The protein belongs to the RRM elav family. As to quaternary structure, interacts (via RRM3) with cirbp. Unable to form oligomers. Part of a ribonucleoprotein (RNP) complex, at least composed of elavl1/elrA and/or elavl2/elrB, igf2bp3/vg1RBP, ddx6/Xp54, ybx2/frgy2, lsm14b/rap55b and, in a subset of RNP complexes, stau1/staufen.

It localises to the cytoplasm. Its subcellular location is the cell cortex. Its function is as follows. RNA-binding protein that binds to the 3'-UTR region of mRNAs and increases their stability. Involved in embryonic stem cells (ESCs) differentiation: preferentially binds mRNAs that are not methylated by N6-methyladenosine (m6A), stabilizing them, promoting ESCs differentiation. Binds to poly-U elements and AU-rich elements (AREs) in the 3'-UTR of target mRNAs. Acts cooperatively with cribp to stabilize AU-rich sequence (ARE)-containing mRNAs. May play a role during gastrulation. Required for the vegetal localization of vg1 mRNA. In Xenopus laevis (African clawed frog), this protein is ELAV-like protein 1-B (elavl1-b).